Consider the following 381-residue polypeptide: Glucose-1-phosphate adenylyltransferase (381 aa).

Alpha-D-glucose 1-phosphate contacts are provided by residues tyrosine 100, glycine 165, 180-181 (EK), and serine 191.

It belongs to the bacterial/plant glucose-1-phosphate adenylyltransferase family. In terms of assembly, homotetramer.

It carries out the reaction alpha-D-glucose 1-phosphate + ATP + H(+) = ADP-alpha-D-glucose + diphosphate. The protein operates within glycan biosynthesis; glycogen biosynthesis. In terms of biological role, involved in the biosynthesis of ADP-glucose, a building block required for the elongation reactions to produce glycogen. Catalyzes the reaction between ATP and alpha-D-glucose 1-phosphate (G1P) to produce pyrophosphate and ADP-Glc. The polypeptide is Glucose-1-phosphate adenylyltransferase (Mycoplasma mobile (strain ATCC 43663 / 163K / NCTC 11711) (Mesomycoplasma mobile)).